Consider the following 82-residue polypeptide: Small ribosomal subunit protein bS16 (82 aa).

This sequence belongs to the bacterial ribosomal protein bS16 family.

The polypeptide is Small ribosomal subunit protein bS16 (Methylobacillus flagellatus (strain ATCC 51484 / DSM 6875 / VKM B-1610 / KT)).